Reading from the N-terminus, the 1338-residue chain is P-type sodium-transporting ATPase4 (1338 aa).

The disordered stretch occupies residues 1–106; it reads MAARASADKL…KSISSVSQMH (106 aa). The segment covering 55 to 69 has biased composition (basic and acidic residues); it reads AEEKVAGHDGESPRR. Residues 91-104 are compositionally biased toward polar residues; that stretch reads GHSQLGKSISSVSQ. 8 helical membrane-spanning segments follow: residues 229-249, 255-275, 418-438, 456-476, 985-1005, 1068-1088, 1261-1281, and 1288-1308; these read IFIQ…AIAS, WVEG…ATYM, LGGM…VVAI, IVLV…PMVV, FVCF…IAIA, IFEA…CTGV, MHLA…VPGI, and CALP…NLIL.

It belongs to the cation transport ATPase (P-type) (TC 3.A.3) family.

Its subcellular location is the cell membrane. It catalyses the reaction Na(+)(in) + ATP + H2O = Na(+)(out) + ADP + phosphate + H(+). With respect to regulation, inhibited by cipargamin, a synthetic spiroindolone. Inhibited by pyrazoleamide PA21A050, structurally unrelated to the spiroindolones. Inhibited by (+)-SJ733, a dihydroisoquinolone compound. Sodium-exporting ATPase. Required for the extrusion of Na(+) from the parasites to maintain a low cytosolic concentration of Na(+). Required for maintaining the viability of extracellular parasites but not for intracellular growth, egress or invasion. Involved in parasite virulence. The sequence is that of P-type sodium-transporting ATPase4 from Toxoplasma gondii (strain ATCC 50861 / VEG).